The following is a 350-amino-acid chain: tRNA pseudouridine synthase D (350 aa).

Phe27 serves as a coordination point for substrate. Asp80 acts as the Nucleophile in catalysis. Residue Asn129 coordinates substrate. One can recognise a TRUD domain in the interval 155 to 303 (GVPNYFGVQR…VDTTRRAINL (149 aa)). Phe329 lines the substrate pocket.

This sequence belongs to the pseudouridine synthase TruD family.

The catalysed reaction is uridine(13) in tRNA = pseudouridine(13) in tRNA. In terms of biological role, responsible for synthesis of pseudouridine from uracil-13 in transfer RNAs. The protein is tRNA pseudouridine synthase D of Proteus mirabilis (strain HI4320).